The chain runs to 151 residues: 3-dehydroquinate dehydratase (151 aa).

Y26 (proton acceptor) is an active-site residue. Substrate contacts are provided by N75, H81, and D88. H101 functions as the Proton donor in the catalytic mechanism. Substrate contacts are provided by residues 102–103 (LS) and R112.

Belongs to the type-II 3-dehydroquinase family. As to quaternary structure, homododecamer.

It catalyses the reaction 3-dehydroquinate = 3-dehydroshikimate + H2O. It functions in the pathway metabolic intermediate biosynthesis; chorismate biosynthesis; chorismate from D-erythrose 4-phosphate and phosphoenolpyruvate: step 3/7. In terms of biological role, catalyzes a trans-dehydration via an enolate intermediate. This chain is 3-dehydroquinate dehydratase, found in Shewanella sediminis (strain HAW-EB3).